Here is a 183-residue protein sequence, read N- to C-terminus: Translocon-associated protein subunit beta (183 aa).

Residues 1-17 (MRLLASVLLALFAVSHA) form the signal peptide. At 18 to 149 (EEGARLLASK…DRRFSPHFLD (132 aa)) the chain is on the lumenal side. Residues N88 and N104 are each glycosylated (N-linked (GlcNAc...) asparagine). Residues 150 to 169 (WAAFGVMTLPSIGIPLLLWY) traverse the membrane as a helical segment. At 170–183 (SSKRKYDTPKSKKN) the chain is on the cytoplasmic side.

This sequence belongs to the TRAP-beta family. Heterotetramer of TRAP-alpha, TRAP-beta, TRAP-delta and TRAP-gamma. Interacts with STING1.

It localises to the endoplasmic reticulum membrane. Its function is as follows. TRAP proteins are part of a complex whose function is to bind calcium to the ER membrane and thereby regulate the retention of ER resident proteins. In Canis lupus familiaris (Dog), this protein is Translocon-associated protein subunit beta (SSR2).